The primary structure comprises 344 residues: Ferrochelatase (344 aa).

The Fe cation site is built by H191 and E271.

The protein belongs to the ferrochelatase family.

The protein localises to the cytoplasm. The catalysed reaction is heme b + 2 H(+) = protoporphyrin IX + Fe(2+). The protein operates within porphyrin-containing compound metabolism; protoheme biosynthesis; protoheme from protoporphyrin-IX: step 1/1. Catalyzes the ferrous insertion into protoporphyrin IX. The sequence is that of Ferrochelatase from Pelagibacter ubique (strain HTCC1062).